The primary structure comprises 187 residues: UPF0301 protein HSM_1900 (187 aa).

This sequence belongs to the UPF0301 (AlgH) family.

The polypeptide is UPF0301 protein HSM_1900 (Histophilus somni (strain 2336) (Haemophilus somnus)).